The following is an 816-amino-acid chain: Sodium/hydrogen exchanger 1 (816 aa).

At 1–98 (MLLWSAVRGL…FPVLGIDYTH (98 aa)) the chain is on the extracellular side. A compositionally biased stretch (polar residues) spans 37-50 (LQLSPTDSTTPDSQ). Positions 37-79 (LQLSPTDSTTPDSQPSRERSIGDVTTAPPEVTPESRPVNRSVT) are disordered. An N-linked (GlcNAc...) asparagine glycan is attached at N75. A helical membrane pass occupies residues 99–121 (VRTPFEISLWILLACLMKIGFHV). Over 122–130 (IPTISSIVP) the chain is Cytoplasmic. Residues 131–148 (ESCLLIVVGLLVGGLIKG) traverse the membrane as a helical segment. Residues 149 to 158 (VGEKPPFLQS) lie on the Extracellular side of the membrane. The helical transmembrane segment at 159–176 (EVFFLFLLPPIILDAGYF) threads the bilayer. Topologically, residues 177–186 (LPLRQFTENL) are cytoplasmic. A helical membrane pass occupies residues 187 to 215 (GTILIFAVVGTLWNAFFLGGLMYAVCLVG). The Extracellular portion of the chain corresponds to 216 to 222 (GEQINNI). Residues 223–249 (GLLDNLLFGSIISAVDPVAVLAVFEEI) form a helical membrane-spanning segment. The Cytoplasmic portion of the chain corresponds to 250 to 252 (HIN). The helical transmembrane segment at 253–283 (ELLHILVFGESLLNDAVTVVLYHLFEEFANY) threads the bilayer. Residues 284 to 287 (DHVG) are Extracellular-facing. A helical transmembrane segment spans residues 288–322 (IVDIVLGFLSFFVVALGGVFVGVVYGVIAAFTSRF). Residues 323–328 (TAHIRV) are Cytoplasmic-facing. Residues 329-341 (IEPLFVFLYSYMA) form a helical membrane-spanning segment. At 342–350 (YLSAELFHL) the chain is on the extracellular side. Residues 351–371 (SGIMALIASGVVMRPYVEANI) traverse the membrane as a helical segment. Residues 372–373 (SH) are Cytoplasmic-facing. A helical transmembrane segment spans residues 374-404 (KSHTTIKYFLKMWSSVSETLIFIFLGVSTVA). The Extracellular portion of the chain corresponds to 405 to 410 (GSHHWN). The helical transmembrane segment at 411–438 (WTFVISTLLFCLIARVLGVLGLTWFINK) threads the bilayer. The Cytoplasmic portion of the chain corresponds to 439 to 444 (FRIVKL). The chain crosses the membrane as a helical span at residues 445-469 (TPKDQFIIAYGGLRGAIAFSLGYLL). Topologically, residues 470–475 (DKKHFP) are extracellular. The helical transmembrane segment at 476–505 (MCDLFLTAIITVIFFTVFVQGMTIRPLVDL) threads the bilayer. The interval 503-545 (VDLLAVKKKQETKRSINEEIHTQFLDHLLTGIEDICGHYGHHH) is interaction with TESC. Residues 506–816 (LAVKKKQETK…EGEPFIPKGQ (311 aa)) lie on the Cytoplasmic side of the membrane. The segment at 509–516 (KKKQETKR) is PI(4,5)P2-binding region. The segment at 515-545 (KRSINEEIHTQFLDHLLTGIEDICGHYGHHH) is interaction with CHP2. Residues 540–545 (HYGHHH) form a confers pH-dependent PI(4,5)P2 binding region. The interval 552–560 (RFNKKYVKK) is PI(4,5)P2-binding region. 2 positions are modified to phosphoserine: S599 and S602. The residue at position 603 (T603) is a Phosphothreonine. Phosphoserine is present on residues S605 and S648. Residues 633–816 (KILRNNLQKT…EGEPFIPKGQ (184 aa)) are interaction with TESC. The tract at residues 633 to 816 (KILRNNLQKT…EGEPFIPKGQ (184 aa)) is interaction with CALM1. An interaction with PPP3CA region spans residues 684–687 (LTVP). Phosphoserine occurs at positions 693, 697, and 703. An interaction with PPP3CA region spans residues 715 to 720 (PVITID). S723, S726, S729, S786, S788, and S797 each carry phosphoserine. The segment at 748 to 816 (PRVAEEAAEE…EGEPFIPKGQ (69 aa)) is disordered. Positions 783-792 (PSDSPSSQRM) are enriched in polar residues.

It belongs to the monovalent cation:proton antiporter 1 (CPA1) transporter (TC 2.A.36) family. As to quaternary structure, homodimer; dimerization is crucial for its function. Oligomer. Interacts with CALM in a calcium-dependent manner. Interacts with TESC. Interacts (via the juxtamembrane region of the cytoplasmic C-terminal domain) with CHP1; the interaction occurs at the plasma membrane in a calcium-dependent manner. Interacts with CHP2; the interaction occurs in a calcium-dependent manner. Interacts with EZR; regulates the cytoskeletal interactions of SLC9A1 and promotes stress fiber formation. Ubiquitinated, leading to its degradation by the proteasome. Ubiquitination is reduced by CHP1. Post-translationally, O-glycosylated. In terms of processing, palmitoylated; may play a major role in SLC9A1 regulation. Phosphorylation at Ser-648 by AKT1 reduces SLC9A1 binding to CALM1. As to expression, kidney and intestine.

It localises to the cell membrane. It is found in the basolateral cell membrane. It catalyses the reaction Na(+)(in) + H(+)(out) = Na(+)(out) + H(+)(in). It carries out the reaction Li(+)(out) + H(+)(in) = Li(+)(in) + H(+)(out). The enzyme catalyses Li(+)(in) + Na(+)(out) = Li(+)(out) + Na(+)(in). With respect to regulation, activated at acidic pHs. Inhibited by cariporide and eniporide. Phosphatidylinositol 4,5-bisphosphate (PI(4,5)P2) and phosphatidylinositol 3,4,5-trisphosphate (PI(3,4,5)P3) bind and differentially regulate SLC9A1 activity. Functionally, electroneutral Na(+) /H(+) antiporter that extrudes Na(+) in exchange for external protons driven by the inward sodium ion chemical gradient, protecting cells from acidification that occurs from metabolism. Exchanges intracellular H(+) ions for extracellular Na(+) in 1:1 stoichiometry. Plays a key role in maintening intracellular pH neutral and cell volume, and thus is important for cell growth, proliferation, migration and survival. In addition, can transport lithium Li(+) and functions also as a Na(+)/Li(+) antiporter. SLC9A1 also functions in membrane anchoring and organization of scaffolding complexes that coordinate signaling inputs. In Oryctolagus cuniculus (Rabbit), this protein is Sodium/hydrogen exchanger 1 (SLC9A1).